A 77-amino-acid polypeptide reads, in one-letter code: UPF0401 protein UTI89_C4989 (77 aa).

The protein belongs to the UPF0401 family.

This is UPF0401 protein UTI89_C4989 from Escherichia coli (strain UTI89 / UPEC).